We begin with the raw amino-acid sequence, 111 residues long: Small ribosomal subunit protein mS38 (111 aa).

Basic residues predominate over residues 82–99 (RKRKKKMKKHKLRKRRKR). The segment at 82-111 (RKRKKKMKKHKLRKRRKREKAERRKLSQGR) is disordered. Over residues 100–111 (EKAERRKLSQGR) the composition is skewed to basic and acidic residues.

This sequence belongs to the mitochondrion-specific ribosomal protein mS38 family. Component of the mitochondrial small ribosomal subunit (mt-SSU). Mature yeast 74S mitochondrial ribosomes consist of a small (37S) and a large (54S) subunit. The 37S small subunit contains a 15S ribosomal RNA (15S mt-rRNA) and 34 different proteins. The 54S large subunit contains a 21S rRNA (21S mt-rRNA) and 46 different proteins.

It is found in the mitochondrion. The protein resides in the mitochondrion inner membrane. In terms of biological role, component of the mitochondrial ribosome (mitoribosome), a dedicated translation machinery responsible for the synthesis of mitochondrial genome-encoded proteins, including at least some of the essential transmembrane subunits of the mitochondrial respiratory chain. The mitoribosomes are attached to the mitochondrial inner membrane and translation products are cotranslationally integrated into the membrane. mS38 is also involved in the splicing of the COX1 mRNA. The sequence is that of Small ribosomal subunit protein mS38 (QRI5) from Saccharomyces cerevisiae (strain ATCC 204508 / S288c) (Baker's yeast).